The following is a 151-amino-acid chain: Large-conductance mechanosensitive channel (151 aa).

The next 2 membrane-spanning stretches (helical) occupy residues 12-32 (GNIV…ALVT) and 71-91 (VLLS…FLVV). The disordered stretch occupies residues 125-151 (NSNSSGRHEAPGTAGTPPPNYGPRADT).

Belongs to the MscL family. As to quaternary structure, homopentamer.

The protein resides in the cell membrane. Channel that opens in response to stretch forces in the membrane lipid bilayer. May participate in the regulation of osmotic pressure changes within the cell. The sequence is that of Large-conductance mechanosensitive channel from Mycobacterium ulcerans (strain Agy99).